The sequence spans 101 residues: Small ribosomal subunit protein uS14A (101 aa).

The segment at A47–L66 is disordered.

The protein belongs to the universal ribosomal protein uS14 family. Part of the 30S ribosomal subunit. Contacts proteins S3 and S10.

Functionally, binds 16S rRNA, required for the assembly of 30S particles and may also be responsible for determining the conformation of the 16S rRNA at the A site. The sequence is that of Small ribosomal subunit protein uS14A from Myxococcus xanthus (strain DK1622).